A 127-amino-acid chain; its full sequence is Large ribosomal subunit protein uL22 (127 aa).

It belongs to the universal ribosomal protein uL22 family. As to quaternary structure, part of the 50S ribosomal subunit.

This protein binds specifically to 23S rRNA; its binding is stimulated by other ribosomal proteins, e.g. L4, L17, and L20. It is important during the early stages of 50S assembly. It makes multiple contacts with different domains of the 23S rRNA in the assembled 50S subunit and ribosome. Functionally, the globular domain of the protein is located near the polypeptide exit tunnel on the outside of the subunit, while an extended beta-hairpin is found that lines the wall of the exit tunnel in the center of the 70S ribosome. The sequence is that of Large ribosomal subunit protein uL22 from Methylorubrum populi (strain ATCC BAA-705 / NCIMB 13946 / BJ001) (Methylobacterium populi).